A 136-amino-acid chain; its full sequence is MIEESKENSLKYFLIQSVASVIFLASILNQSFSFLIPFALLIKIGAAPFHMWLVSISKSMSWKVLSLLMTFQKIGPLLGLAMLSSVSHLSWLMVNMSSFLLMLVYYVTYLAILYFAVILLQQTPMYSLAQMNSNAS.

The next 4 helical transmembrane spans lie at 12–32 (YFLIQSVASVIFLASILNQSF), 34–54 (FLIPFALLIKIGAAPFHMWLV), 74–94 (IGPLLGLAMLSSVSHLSWLMV), and 99–119 (FLLMLVYYVTYLAILYFAVIL).

This sequence belongs to the complex I subunit 2 family.

It is found in the mitochondrion inner membrane. It carries out the reaction a ubiquinone + NADH + 5 H(+)(in) = a ubiquinol + NAD(+) + 4 H(+)(out). Its function is as follows. Core subunit of the mitochondrial membrane respiratory chain NADH dehydrogenase (Complex I) that is believed to belong to the minimal assembly required for catalysis. Complex I functions in the transfer of electrons from NADH to the respiratory chain. The immediate electron acceptor for the enzyme is believed to be ubiquinone. This is NADH-ubiquinone oxidoreductase chain 2 (ND2) from Artemia salina (Brine shrimp).